We begin with the raw amino-acid sequence, 430 residues long: Adenylosuccinate synthetase (430 aa).

GTP contacts are provided by residues 12–18 (GDEGKGK) and 40–42 (GHT). The active-site Proton acceptor is the Asp13. Mg(2+) contacts are provided by Asp13 and Gly40. IMP is bound by residues 13-16 (DEGK), 38-41 (NAGH), Thr128, Arg142, Gln223, Thr238, and Arg302. His41 serves as the catalytic Proton donor. A substrate-binding site is contributed by 298 to 304 (TTTGRPR). Residues Arg304, 330–332 (SID), and 412–414 (SVG) contribute to the GTP site.

The protein belongs to the adenylosuccinate synthetase family. Homodimer. The cofactor is Mg(2+).

It is found in the cytoplasm. The catalysed reaction is IMP + L-aspartate + GTP = N(6)-(1,2-dicarboxyethyl)-AMP + GDP + phosphate + 2 H(+). The protein operates within purine metabolism; AMP biosynthesis via de novo pathway; AMP from IMP: step 1/2. In terms of biological role, plays an important role in the de novo pathway of purine nucleotide biosynthesis. Catalyzes the first committed step in the biosynthesis of AMP from IMP. This Enterococcus faecalis (strain ATCC 700802 / V583) protein is Adenylosuccinate synthetase.